The primary structure comprises 330 residues: Olfactory receptor 5P73 (330 aa).

Topologically, residues 1–28 (MAFLEDGNHTTVTEFFLLGLTDDPVLRD) are extracellular. A glycan (N-linked (GlcNAc...) asparagine) is linked at Asn-8. A helical membrane pass occupies residues 29-49 (ILFIIILCIYLVTVSGNLSTI). Topologically, residues 50-57 (LLIRVSSQ) are cytoplasmic. The helical transmembrane segment at 58–78 (LHHPMYFILSHLASVDIGISS) threads the bilayer. The Extracellular portion of the chain corresponds to 79–102 (SVTPNMLATFLVKQNTISYIGCSI). Cys-100 and Cys-192 form a disulfide bridge. The helical transmembrane segment at 103–123 (QFTSAAFFGTVECFLLATMAY) threads the bilayer. The Cytoplasmic portion of the chain corresponds to 124 to 136 (DRFVAICNPLLYS). Residues 137 to 157 (TKMSTEACIQLVVGSYIQGFL) traverse the membrane as a helical segment. Over 158-199 (NASFFTLSFFSLFFCGPNRINDFYCDFAPLLELSCSDVTVAV) the chain is Extracellular. A helical membrane pass occupies residues 200–220 (VITSISAGFITLTTVFVIAIS). Residues 221-240 (YSCIFITIMKMHSTESRCKA) lie on the Cytoplasmic side of the membrane. A helical membrane pass occupies residues 241 to 261 (FSTCTSHLTAVILFYGTAIFI). Topologically, residues 262–274 (YVMPKSSYSTDQN) are extracellular. A helical transmembrane segment spans residues 275–295 (KVLSIFYTVVIPMLNPLIYSL). Residues 296 to 330 (RNNEIKEALKRHLGKKVFSYGNLFCKTHYNHNYPV) lie on the Cytoplasmic side of the membrane.

This sequence belongs to the G-protein coupled receptor 1 family.

The protein localises to the cell membrane. Its function is as follows. Potential odorant receptor. The sequence is that of Olfactory receptor 5P73 from Mus musculus (Mouse).